We begin with the raw amino-acid sequence, 74 residues long: Defensin (74 aa).

The signal sequence occupies residues 1–22; that stretch reads MRGLCICLVFLLVCGLVSATAA. Positions 23-36 are excised as a propeptide; the sequence is APAESEVAHLRVRR. Intrachain disulfides connect Cys-40/Cys-61, Cys-47/Cys-69, and Cys-51/Cys-71.

Hemolymph.

Its subcellular location is the secreted. Its function is as follows. Antibacterial activity against Gram-positive and Gram-negative bacteria. This is Defensin (VSNA1) from Dermacentor variabilis (American dog tick).